A 141-amino-acid chain; its full sequence is Protein Turandot Z (141 aa).

The N-terminal stretch at 1–23 (MYFAIRLSFVLAVLFCLTGNGNA) is a signal peptide.

It belongs to the Turandot family.

Its subcellular location is the secreted. Its function is as follows. A humoral factor that may play a role in stress tolerance. This is Protein Turandot Z from Drosophila yakuba (Fruit fly).